Here is a 151-residue protein sequence, read N- to C-terminus: Protein SprT-like (151 aa).

A SprT-like domain is found at 7–146 (QSLTESIAIK…CGRCGGILKL (140 aa)). Histidine 67 serves as a coordination point for Zn(2+). Glutamate 68 is a catalytic residue. Histidine 71 provides a ligand contact to Zn(2+).

Belongs to the SprT family. It depends on Zn(2+) as a cofactor.

Its subcellular location is the cytoplasm. The sequence is that of Protein SprT-like from Staphylococcus epidermidis (strain ATCC 35984 / DSM 28319 / BCRC 17069 / CCUG 31568 / BM 3577 / RP62A).